The following is a 143-amino-acid chain: Cofilin (143 aa).

The ADF-H domain occupies 5-137 (GVAVADESLT…AYESVLEKVS (133 aa)).

It belongs to the actin-binding proteins ADF family.

Its subcellular location is the cytoplasm. It is found in the cytoskeleton. The protein resides in the nucleus matrix. Functionally, controls reversibly actin polymerization and depolymerization in a pH-sensitive manner. It has the ability to bind G- and F-actin in a 1:1 ratio of cofilin to actin. Binding to F-actin is regulated by tropomyosin. It is the major component of intranuclear and cytoplasmic actin rods. Required for accumulation of actin at the cell division site via depolymerizing actin at the cell ends. In association with myosin II has a role in the assembly of the contractile ring via severing actin filaments. Involved in the maintenance of the contractile ring once formed. In association with profilin and capping protein, has a role in the mitotic reorganization of the actin cytoskeleton. The sequence is that of Cofilin (COF1) from Eremothecium gossypii (strain ATCC 10895 / CBS 109.51 / FGSC 9923 / NRRL Y-1056) (Yeast).